The following is a 396-amino-acid chain: Homoserine O-acetyltransferase (396 aa).

An AB hydrolase-1 domain is found at 53 to 370 (NAILVCHALT…DRGHDAFLLE (318 aa)). The Nucleophile role is filled by Ser-158. Residue Arg-228 coordinates substrate. Catalysis depends on residues Asp-331 and His-364. Asp-365 contacts substrate.

It belongs to the AB hydrolase superfamily. MetX family. In terms of assembly, homodimer.

It localises to the cytoplasm. It carries out the reaction L-homoserine + acetyl-CoA = O-acetyl-L-homoserine + CoA. The protein operates within amino-acid biosynthesis; L-methionine biosynthesis via de novo pathway; O-acetyl-L-homoserine from L-homoserine: step 1/1. Its function is as follows. Transfers an acetyl group from acetyl-CoA to L-homoserine, forming acetyl-L-homoserine. The polypeptide is Homoserine O-acetyltransferase (Gluconobacter oxydans (strain 621H) (Gluconobacter suboxydans)).